A 222-amino-acid chain; its full sequence is Deoxyribose-phosphate aldolase (222 aa).

Residue Asp89 is the Proton donor/acceptor of the active site. Lys152 serves as the catalytic Schiff-base intermediate with acetaldehyde. The active-site Proton donor/acceptor is Lys181.

The protein belongs to the DeoC/FbaB aldolase family. DeoC type 1 subfamily.

The protein resides in the cytoplasm. The enzyme catalyses 2-deoxy-D-ribose 5-phosphate = D-glyceraldehyde 3-phosphate + acetaldehyde. The protein operates within carbohydrate degradation; 2-deoxy-D-ribose 1-phosphate degradation; D-glyceraldehyde 3-phosphate and acetaldehyde from 2-deoxy-alpha-D-ribose 1-phosphate: step 2/2. In terms of biological role, catalyzes a reversible aldol reaction between acetaldehyde and D-glyceraldehyde 3-phosphate to generate 2-deoxy-D-ribose 5-phosphate. This chain is Deoxyribose-phosphate aldolase, found in Clostridium novyi (strain NT).